We begin with the raw amino-acid sequence, 352 residues long: Ion-translocating oxidoreductase complex subunit D (352 aa).

4 consecutive transmembrane segments (helical) span residues 20 to 40, 42 to 62, 89 to 109, and 123 to 143; these read IMLL…WFFG, GTLV…ALVL, IPPL…VIIA, and PAMI…TSWL. Thr187 carries the FMN phosphoryl threonine modification. 5 helical membrane passes run 214–234, 242–262, 267–287, 301–321, and 322–342; these read ILAG…GLWL, WHIP…GWLF, LAAP…FFIL, LIFG…GGYP, and DGVA…DYYT.

It belongs to the NqrB/RnfD family. As to quaternary structure, the complex is composed of six subunits: RsxA, RsxB, RsxC, RsxD, RsxE and RsxG. The cofactor is FMN.

It is found in the cell inner membrane. Its function is as follows. Part of a membrane-bound complex that couples electron transfer with translocation of ions across the membrane. Required to maintain the reduced state of SoxR. In Shigella boydii serotype 18 (strain CDC 3083-94 / BS512), this protein is Ion-translocating oxidoreductase complex subunit D.